Reading from the N-terminus, the 304-residue chain is Solute carrier family 25 member 34 (304 aa).

Solcar repeat units lie at residues 4-97 (VPPA…ACQA), 101-194 (QQPG…AKAW), and 204-295 (DSWL…LRKL). A run of 6 helical transmembrane segments spans residues 7-27 (AVDLVLGASACCLACVFTNPL), 45-65 (TYPRLYRGFVASVVAVVRADG), 98-120 (GLSQQPGGTVVAGAVAGALGAFV), 170-191 (VGGAVPRVMVGSAAQLATFASA), 206-226 (WLVALAGGMISSIAVVAVMTP), and 278-301 (LGPHTILSMLFWDELRKLAGWGQH).

This sequence belongs to the mitochondrial carrier (TC 2.A.29) family.

It is found in the mitochondrion inner membrane. The enzyme catalyses a dicarboxylate(in) + sulfate(out) = a dicarboxylate(out) + sulfate(in). Functionally, putative antiporter that exchanges dicarboxylates and sulfur oxoanions across the inner membrane of mitochondria. The protein is Solute carrier family 25 member 34 (SLC25A34) of Bos taurus (Bovine).